Reading from the N-terminus, the 203-residue chain is Peptidoglycan-recognition protein SA (203 aa).

The signal sequence occupies residues 1 to 26; it reads MQPVRFGSPWIMAIGLVLLLLAFVSA. Intrachain disulfides connect Cys37–Cys160 and Cys74–Cys80. Residues 59–186 enclose the N-acetylmuramoyl-L-alanine amidase domain; it reads RPIRYVVIHH…SQVISTQSPG (128 aa). Peptidoglycan binding regions lie at residues 87 to 90 and 97 to 102; these read MQAY and FNDISY.

Belongs to the N-acetylmuramoyl-L-alanine amidase 2 family. In larvae, it is expressed in fat body. Also expressed in uninduced hemocytes and mbn-2 cells.

Its subcellular location is the secreted. The enzyme catalyses N-acetyl-D-glucosaminyl-N-acetylmuramoyl-L-alanyl-meso-2,6-diaminoheptanedioyl-D-alanine + H2O = N-acetyl-D-glucosaminyl-N-acetylmuramoyl-L-alanyl-meso-2,6-diaminoheptanedioate + D-alanine. In terms of biological role, peptidoglycan-recognition protein that plays a key role in innate immunity by binding to peptidoglycans (PGN) of Gram-positive bacteria and activating the Toll pathway upstream of spz activating enzyme SPE. Has no activity against Gram-negative bacteria and fungi. Shows some partial redundancy with PRPGP-SD in Gram-positive bacteria recognition. May act by forming a complex with GNBP1 that activates the proteolytic cleavage of Spatzle and the subsequent activation of Toll pathway. Binds to diaminopimelic acid-type tetrapeptide PGN (DAP-type PGN) and lysine-type PGN (Lys-type PGN). Has some L,D-carboxypeptidase activity for DAP-type PGN, which are specific to prokaryotes, but not for Lys-type PGN. In Drosophila melanogaster (Fruit fly), this protein is Peptidoglycan-recognition protein SA (PGRP-SA).